We begin with the raw amino-acid sequence, 660 residues long: Bifunctional polymyxin resistance protein ArnA (660 aa).

The segment at 1 to 304 (MKTVVFAYHD…MLGLVQGSRL (304 aa)) is formyltransferase ArnAFT. (6R)-10-formyltetrahydrofolate is bound at residue 86 to 88 (HLI). H104 acts as the Proton donor; for formyltransferase activity in catalysis. (6R)-10-formyltetrahydrofolate is bound by residues R114 and 136 to 140 (VKRAD). A dehydrogenase ArnADH region spans residues 314–660 (RRTRVLILGV…RTVDLTDKPS (347 aa)). Residues D347 and 368-369 (DI) contribute to the NAD(+) site. UDP-alpha-D-glucuronate is bound by residues A393, Y398, and 432 to 433 (TS). The active-site Proton acceptor; for decarboxylase activity is E434. Residues R460, N492, 526-535 (KLIDGGKQKR), and Y613 contribute to the UDP-alpha-D-glucuronate site. R619 acts as the Proton donor; for decarboxylase activity in catalysis.

In the N-terminal section; belongs to the Fmt family. UDP-L-Ara4N formyltransferase subfamily. The protein in the C-terminal section; belongs to the NAD(P)-dependent epimerase/dehydratase family. UDP-glucuronic acid decarboxylase subfamily. Homohexamer, formed by a dimer of trimers.

The catalysed reaction is UDP-alpha-D-glucuronate + NAD(+) = UDP-beta-L-threo-pentopyranos-4-ulose + CO2 + NADH. It catalyses the reaction UDP-4-amino-4-deoxy-beta-L-arabinose + (6R)-10-formyltetrahydrofolate = UDP-4-deoxy-4-formamido-beta-L-arabinose + (6S)-5,6,7,8-tetrahydrofolate + H(+). The protein operates within nucleotide-sugar biosynthesis; UDP-4-deoxy-4-formamido-beta-L-arabinose biosynthesis; UDP-4-deoxy-4-formamido-beta-L-arabinose from UDP-alpha-D-glucuronate: step 1/3. It participates in nucleotide-sugar biosynthesis; UDP-4-deoxy-4-formamido-beta-L-arabinose biosynthesis; UDP-4-deoxy-4-formamido-beta-L-arabinose from UDP-alpha-D-glucuronate: step 3/3. It functions in the pathway bacterial outer membrane biogenesis; lipopolysaccharide biosynthesis. Bifunctional enzyme that catalyzes the oxidative decarboxylation of UDP-glucuronic acid (UDP-GlcUA) to UDP-4-keto-arabinose (UDP-Ara4O) and the addition of a formyl group to UDP-4-amino-4-deoxy-L-arabinose (UDP-L-Ara4N) to form UDP-L-4-formamido-arabinose (UDP-L-Ara4FN). The modified arabinose is attached to lipid A and is required for resistance to polymyxin and cationic antimicrobial peptides. The polypeptide is Bifunctional polymyxin resistance protein ArnA (Shigella sonnei (strain Ss046)).